The sequence spans 379 residues: F-box protein At1g67340 (379 aa).

The F-box domain occupies 41–92 (ADLLDSIPDDLVISILCKLGSTSRCPADFINVLLTCKRLKGLAMNPIVLSRL). 8 residues coordinate Zn(2+): histidine 304, cysteine 307, cysteine 320, cysteine 323, cysteine 329, cysteine 333, histidine 342, and cysteine 346. The MYND-type; atypical zinc-finger motif lies at 304–346 (HAGCGRPETRKHEFRRCSVCGVVNYCSRACQALDWKLRHKMDC). The disordered stretch occupies residues 358–379 (GGEGNVQIDGNGNGDNVLLPMS).

As to quaternary structure, part of a SCF (ASK-cullin-F-box) protein ligase complex. Interacts with SKP1A/ASK1, SKP1B/ASK2, ASK4, ASK11 and ASK13.

The protein resides in the nucleus. The protein operates within protein modification; protein ubiquitination. Its function is as follows. Component of SCF(ASK-cullin-F-box) E3 ubiquitin ligase complexes, which may mediate the ubiquitination and subsequent proteasomal degradation of target proteins. This chain is F-box protein At1g67340, found in Arabidopsis thaliana (Mouse-ear cress).